Reading from the N-terminus, the 336-residue chain is MTEIQKPYDLKGRSLLKESDFTKAEFEGLIDFAITLKEYKKNGIKHHYLSGKNIALLFEKNSTRTRAAFTVASIDLGAHPEFLGKNDIQLGKKESVEDTAKVLGRMFDGIEFRGFSQQAVEDLAKFSGVPVWNGLTDDWHPTQMLADFMTIKENFGYLEGINLTYVGDGRNNIAHSLMVAGAMLGVNVRICTPKSLNPKDAYVDIAKEKASQYGGSVMITDNIAEAVENTDAIYTDVWVSMGEESEFEQRINLLKDYQVNQQLFDLTGKDSTIFLHCLPAFHDTNTLYGQEIYEKYGLAEMEVTDQIFRSEHSKVFDQAENRMHTIKAVMAATLGS.

Residues 62–65, Q89, R113, and 140–143 contribute to the carbamoyl phosphate site; these read STRT and HPTQ. L-ornithine-binding positions include N172, D236, and 240–241; that span reads SM. Carbamoyl phosphate contacts are provided by residues 277-278 and R322; that span reads CL.

Belongs to the aspartate/ornithine carbamoyltransferase superfamily. OTCase family.

The protein localises to the cytoplasm. It catalyses the reaction carbamoyl phosphate + L-ornithine = L-citrulline + phosphate + H(+). The protein operates within amino-acid degradation; L-arginine degradation via ADI pathway; carbamoyl phosphate from L-arginine: step 2/2. Reversibly catalyzes the transfer of the carbamoyl group from carbamoyl phosphate (CP) to the N(epsilon) atom of ornithine (ORN) to produce L-citrulline. This chain is Ornithine carbamoyltransferase, catabolic, found in Staphylococcus aureus (strain MRSA252).